A 471-amino-acid polypeptide reads, in one-letter code: Trehalose-binding lipoprotein LpqY (471 aa).

The N-terminal stretch at 1–28 (MDGRQVVRARRWCATAAVALMTASTVAA) is a signal peptide. The N-palmitoyl cysteine moiety is linked to residue Cys-29. A lipid anchor (S-diacylglycerol cysteine) is attached at Cys-29. 10 residues coordinate alpha,alpha-trehalose: Asn-45, Glu-46, Gln-79, Asp-100, Asn-154, Tyr-198, Trp-279, Tyr-281, Gly-354, and Arg-424. Cys-57 and Cys-375 form a disulfide bridge.

Belongs to the bacterial solute-binding protein 1 family. As to quaternary structure, monomer. The complex is composed of two ATP-binding proteins (SugC), two transmembrane proteins (SugA and SugB) and a solute-binding protein (LpqY).

The protein resides in the cell inner membrane. Its function is as follows. Part of the ABC transporter complex LpqY-SugA-SugB-SugC, which is highly specific for uptake of trehalose. Involved in the recycling of extracellular trehalose released from trehalose-containing molecules synthesized by M.thermoresistibile. Trehalose uptake is essential for virulence. Binds deuterated trehalose with similar high affinity to trehalose, trehalose analogs including galactotrehalose, 4-azido-4-deoxy-trehalose, 6-azido-6-deoxy-trehalose, 3-azido-3-deoxy-trehalose and mannotrehalose in the order of decreasing affinity, respectively, and 2-azido-2-deoxy-trehalose and kojibiose (alpha1,2-glycosidic bond) with very low affinity. Does not recognize single glucose, 6-amino-6-deoxy-trehalose, trehalose-6-phosphate, nigerose (alpha1,3-glycosidic bond), maltose (alpha1,4-glycosidic bond), isomaltose (alpha1,6-glycosidic bond) or glycerophosphocholine. Decreased recognition of alpha,beta-trehalose and almost no recognition of beta,beta-trehalose. Substrate specificity indicates a strict requirement for an alpha1,1-linked disaccharide. This chain is Trehalose-binding lipoprotein LpqY, found in Mycolicibacterium thermoresistibile (strain ATCC 19527 / DSM 44167 / CIP 105390 / JCM 6362 / NCTC 10409 / 316) (Mycobacterium thermoresistibile).